A 213-amino-acid chain; its full sequence is 3-isopropylmalate dehydratase small subunit (213 aa).

It belongs to the LeuD family. LeuD type 1 subfamily. As to quaternary structure, heterodimer of LeuC and LeuD.

It carries out the reaction (2R,3S)-3-isopropylmalate = (2S)-2-isopropylmalate. The protein operates within amino-acid biosynthesis; L-leucine biosynthesis; L-leucine from 3-methyl-2-oxobutanoate: step 2/4. In terms of biological role, catalyzes the isomerization between 2-isopropylmalate and 3-isopropylmalate, via the formation of 2-isopropylmaleate. This Aromatoleum aromaticum (strain DSM 19018 / LMG 30748 / EbN1) (Azoarcus sp. (strain EbN1)) protein is 3-isopropylmalate dehydratase small subunit.